Here is a 494-residue protein sequence, read N- to C-terminus: MKNIAFDSNKYLSLQRNHILERIKQFDGKLYMEFGGKILEDFHAARVLPGYEPDNKIKLLKELKDQVEIVITINANNIEHSKTRGDLGISYDQEVLRLIDTFNALDIYVGSVVITQYNHQAAADHFQKQLAKNGITSYRHYPIKGYPTDINHIISPDGMGRNDYIKTSRNLIVVTAPGPGSGKLATCISQLYHDQLKGVTSGYAKFETFPVWNLPLHHPVNLAYEAATADLDDVNMIDPFHLEAYGKTAVNYNRDIEVFPVLNRTFERILSQSPYASPTDMGVNMVGFSIVNEEAAIEASRQEIIRRYYQTLVDFKAERVTEAAVKKLELLMNDIGVTPKDRQVTLIARQKAEITGQPALALQLPNGQVVTGKTSDLFGPTAAVIINAIKTLAHISKETHLIEPEYVKPIQGLKINHLGSHNPRLHANEILMALAITAMNNNQADLAMKELGNLKGSEAHSTVILTNEDKHVLRQLGINVTFDPVYQHHKLYRS.

Belongs to the UPF0371 family.

This Streptococcus equi subsp. equi (strain 4047) protein is UPF0371 protein SEQ_1471.